The primary structure comprises 179 residues: Ribosome maturation factor RimM (179 aa).

The region spanning Lys95–Leu174 is the PRC barrel domain.

The protein belongs to the RimM family. As to quaternary structure, binds ribosomal protein uS19.

The protein localises to the cytoplasm. Functionally, an accessory protein needed during the final step in the assembly of 30S ribosomal subunit, possibly for assembly of the head region. Essential for efficient processing of 16S rRNA. May be needed both before and after RbfA during the maturation of 16S rRNA. It has affinity for free ribosomal 30S subunits but not for 70S ribosomes. The sequence is that of Ribosome maturation factor RimM from Campylobacter jejuni subsp. doylei (strain ATCC BAA-1458 / RM4099 / 269.97).